The sequence spans 35 residues: Photosystem II reaction center protein T (35 aa).

A helical transmembrane segment spans residues 3–23 (ALVYTFLLVSTLGIIFFAIFF).

Belongs to the PsbT family. PSII is composed of 1 copy each of membrane proteins PsbA, PsbB, PsbC, PsbD, PsbE, PsbF, PsbH, PsbI, PsbJ, PsbK, PsbL, PsbM, PsbT, PsbY, PsbZ, Psb30/Ycf12, at least 3 peripheral proteins of the oxygen-evolving complex and a large number of cofactors. It forms dimeric complexes.

Its subcellular location is the plastid. It localises to the chloroplast thylakoid membrane. Found at the monomer-monomer interface of the photosystem II (PS II) dimer, plays a role in assembly and dimerization of PSII. PSII is a light-driven water plastoquinone oxidoreductase, using light energy to abstract electrons from H(2)O, generating a proton gradient subsequently used for ATP formation. The sequence is that of Photosystem II reaction center protein T from Gunnera chilensis (Chilean rhubarb).